A 776-amino-acid polypeptide reads, in one-letter code: Rho guanine nucleotide exchange factor 6 (776 aa).

The region spanning 1-111 is the Calponin-homology (CH) domain; that stretch reads MNPEEQIVTW…TLLAVNKATE (111 aa). The tract at residues 115–151 is disordered; sequence SERPCGRSSSLSAANTSQTNPQGAVSSTVSGLQRQSK. Polar residues predominate over residues 121-151; it reads RSSSLSAANTSQTNPQGAVSSTVSGLQRQSK. Phosphoserine is present on Ser-126. Thr-133 bears the Phosphothreonine mark. 2 positions are modified to phosphoserine: Ser-144 and Ser-150. The SH3 domain occupies 160-219; it reads SHQLIVKARFNFKQTNEDELSVCKGDIIYVTRVEEGGWWEGTLNGRTGWFPSNYVREIKS. Phosphoserine is present on Ser-225. One can recognise a DH domain in the interval 241–421; the sequence is YYTVVLQNIL…KTLMGQCQDL (181 aa). The PH domain maps to 443–548; that stretch reads DIKNLGNVIF…WLEQLNRLIR (106 aa). Residue Ser-488 is modified to Phosphoserine. Residues 561-572 are compositionally biased toward low complexity; the sequence is SSSCSAHSSFSS. Residues 561–581 are disordered; sequence SSSCSAHSSFSSTGQPRGPLE. Phosphoserine is present on residues Ser-640 and Ser-684.

As to quaternary structure, interacts with PAK kinases through the SH3 domain. Interacts with GIT1. Component of cytoplasmic complexes, which also contain PXN, GIT1 and PAK1. Interacts with PARVB. Interacts with BIN2. Identified in a complex with BIN2 and GIT2. Interacts with PARVG; the guanine nucleotide exchange factor activity of ARHGEF6 is essential for PARVG-induced enhancement of cell spreading. In terms of tissue distribution, ubiquitous.

Its subcellular location is the cell projection. It localises to the lamellipodium. Its function is as follows. Acts as a RAC1 guanine nucleotide exchange factor (GEF). This chain is Rho guanine nucleotide exchange factor 6 (ARHGEF6), found in Homo sapiens (Human).